The following is a 932-amino-acid chain: Calpain-like protease palB/cpr-8 (932 aa).

Positions 96–419 constitute a Calpain catalytic domain; the sequence is KLHGNIFPPW…FDSLYVNWSP (324 aa). Catalysis depends on residues Cys-178, His-346, and Asn-366. The disordered stretch occupies residues 890–932; it reads QGHVTEGSDDDGGGGGGGGGGVHVEISSDGVVSIGEWEVADED. A compositionally biased stretch (gly residues) spans 902-911; that stretch reads GGGGGGGGGV.

This sequence belongs to the peptidase C2 family. PalB/RIM13 subfamily.

Functionally, required for the proteolytic cleavage of the transcription factor pacc-1 in response to alkaline ambient pH. This Neurospora crassa (strain ATCC 24698 / 74-OR23-1A / CBS 708.71 / DSM 1257 / FGSC 987) protein is Calpain-like protease palB/cpr-8 (cpr-8).